The sequence spans 205 residues: Small ribosomal subunit protein uS4 (205 aa).

Basic and acidic residues predominate over residues 1–16; that stretch reads MSKRETTKYKIDRRMG. The interval 1-46 is disordered; sequence MSKRETTKYKIDRRMGENIWGRPKSPVNRRDYGPGQHGQRRKGKLS. Residues 94 to 157 enclose the S4 RNA-binding domain; the sequence is SRLDAVIYRA…KQLVLVLESV (64 aa).

This sequence belongs to the universal ribosomal protein uS4 family. As to quaternary structure, part of the 30S ribosomal subunit. Contacts protein S5. The interaction surface between S4 and S5 is involved in control of translational fidelity.

One of the primary rRNA binding proteins, it binds directly to 16S rRNA where it nucleates assembly of the body of the 30S subunit. Functionally, with S5 and S12 plays an important role in translational accuracy. This is Small ribosomal subunit protein uS4 from Bartonella henselae (strain ATCC 49882 / DSM 28221 / CCUG 30454 / Houston 1) (Rochalimaea henselae).